A 45-amino-acid polypeptide reads, in one-letter code: Large ribosomal subunit protein bL34 (45 aa).

The tract at residues 1–45 (MTKRTLGGTVRKQKRTSGFRARMRSHTGQNVIRARRKKGRHRLTV) is disordered. Composition is skewed to basic residues over residues 11–25 (RKQK…RMRS) and 33–45 (RARR…RLTV).

Belongs to the bacterial ribosomal protein bL34 family.

The chain is Large ribosomal subunit protein bL34 from Picosynechococcus sp. (strain ATCC 27264 / PCC 7002 / PR-6) (Agmenellum quadruplicatum).